Consider the following 300-residue polypeptide: Folate-binding protein 1 (300 aa).

An N-terminal signal peptide occupies residues Met1–Gly28. Disulfide bonds link Cys38–Cys76, Cys68–Cys111, Cys77–Cys114, Cys102–Cys139, and Cys132–Cys178. N-linked (GlcNAc...) asparagine glycosylation is present at Asn173. Residues Met238–Ile258 traverse the membrane as a helical segment.

This sequence belongs to the folate receptor family. In terms of tissue distribution, expressed in leaves.

Its subcellular location is the membrane. Its function is as follows. Folic acid-binding protein involved in salicylic acid- (SA-) induced folate accumulation by triggering uptake and accumulation of folic acid in cells. May be implicated in the transport of the folates from the site of production (leaves) to the site of storage (fruits and seeds) and utilization (roots). The protein is Folate-binding protein 1 of Arabidopsis thaliana (Mouse-ear cress).